The primary structure comprises 311 residues: MSIKVFGTKEVQDLLKAATNLEGKGGNARSKQIVHRLLSDLFKAIDDLDITPDEVWAGVNYLNKLGQDGEATLLAAGSGLEKYLDIRLDAADKAEGIEGGTPRTIEGPLYVAGATVHDGVSKIDINPDEDAGPLVIHGTVTGPDGKPVAGAVVECWHANSKGFYSHFDPTGAQSDFNLRGAVKTGADGKYEFRTLMPVGYGCPPQGATQQLLNVLGRHGNRPAHVHFFVSSDSARKLTTQFNIEGDPLIWDDFAYATREELIPPVTEKKGGTALGLKADTYKDIEFNLTLTSLVKGKDNQVVHRLRAEVAA.

The Fe cation site is built by Y164, Y200, H224, and H226.

It belongs to the intradiol ring-cleavage dioxygenase family. Homodimer. Fe(3+) is required as a cofactor.

The enzyme catalyses catechol + O2 = cis,cis-muconate + 2 H(+). It functions in the pathway aromatic compound metabolism; beta-ketoadipate pathway; 5-oxo-4,5-dihydro-2-furylacetate from catechol: step 1/3. Can cleave 4-methyl-, 4-chloro-, and 3-methoxycatechol at lower rates than catechol, but has no activity with 4-nitrocatechol or protocatechuic acid. The chain is Catechol 1,2-dioxygenase 1 (catA1) from Acinetobacter lwoffii.